The chain runs to 132 residues: Small ribosomal subunit protein uS8c (132 aa).

Belongs to the universal ribosomal protein uS8 family. Part of the 30S ribosomal subunit.

The protein localises to the plastid. The protein resides in the chloroplast. In terms of biological role, one of the primary rRNA binding proteins, it binds directly to 16S rRNA central domain where it helps coordinate assembly of the platform of the 30S subunit. This Chaetosphaeridium globosum (Charophycean green alga) protein is Small ribosomal subunit protein uS8c (rps8).